The sequence spans 135 residues: Histone H3.3C (135 aa).

The segment at 1-41 (MARTKQTARKSTGGKAPRKQLATKAARKSTPSTCGVKPHRY) is disordered. Position 3 is an asymmetric dimethylarginine; by PRMT6; alternate (Arg-3). A Citrulline; alternate modification is found at Arg-3. Thr-4 is modified (phosphothreonine; by HASPIN). Position 5 is an allysine; alternate (Lys-5). Lys-5 bears the N6,N6,N6-trimethyllysine; alternate mark. Lys-5 carries the N6,N6-dimethyllysine; alternate modification. Position 5 is an N6-(2-hydroxyisobutyryl)lysine; alternate (Lys-5). The residue at position 5 (Lys-5) is an N6-(beta-hydroxybutyryl)lysine; alternate. Lys-5 is modified (N6-acetyllysine; alternate). Lys-5 is subject to N6-methyllysine; alternate. Gln-6 is modified (5-glutamyl dopamine; alternate). Residue Gln-6 is modified to 5-glutamyl serotonin; alternate. The residue at position 7 (Thr-7) is a Phosphothreonine; by PKC. A Citrulline; alternate modification is found at Arg-9. Arg-9 carries the post-translational modification Symmetric dimethylarginine; by PRMT5; alternate. At Lys-10 the chain carries N6,N6,N6-trimethyllysine; alternate. N6,N6-dimethyllysine; alternate is present on Lys-10. An N6-(2-hydroxyisobutyryl)lysine; alternate modification is found at Lys-10. N6-(beta-hydroxybutyryl)lysine; alternate is present on Lys-10. Lys-10 is modified (N6-acetyllysine; alternate). Lys-10 carries the N6-methyllysine; alternate modification. At Lys-10 the chain carries N6-lactoyllysine; alternate. At Ser-11 the chain carries ADP-ribosylserine; alternate. The residue at position 11 (Ser-11) is a Phosphoserine; alternate; by AURKB, AURKC, RPS6KA3, RPS6KA4 and RPS6KA5. Thr-12 is subject to Phosphothreonine; by PKC. Lys-15 carries the N6-(2-hydroxyisobutyryl)lysine; alternate modification. Lys-15 carries the post-translational modification N6-(beta-hydroxybutyryl)lysine; alternate. Lys-15 is subject to N6-acetyllysine; alternate. An N6-lactoyllysine; alternate modification is found at Lys-15. Position 15 is an N6-glutaryllysine; alternate (Lys-15). Lys-15 carries the N6-succinyllysine; alternate modification. The residue at position 18 (Arg-18) is a Citrulline; alternate. Arg-18 is modified (asymmetric dimethylarginine; by CARM1; alternate). 2 positions are modified to N6-(2-hydroxyisobutyryl)lysine; alternate: Lys-19 and Lys-24. Lys-19 and Lys-24 each carry N6-(beta-hydroxybutyryl)lysine; alternate. N6-acetyllysine; alternate is present on residues Lys-19 and Lys-24. 2 positions are modified to N6-methyllysine; alternate: Lys-19 and Lys-24. 2 positions are modified to N6-lactoyllysine; alternate: Lys-19 and Lys-24. N6-glutaryllysine; alternate is present on residues Lys-19 and Lys-24. N6-butyryllysine; alternate is present on residues Lys-19 and Lys-24. Arg-27 carries the citrulline modification. The residue at position 28 (Lys-28) is an N6,N6,N6-trimethyllysine; alternate. Lys-28 is modified (N6,N6-dimethyllysine; alternate). Lys-28 carries the post-translational modification N6-(2-hydroxyisobutyryl)lysine; alternate. Position 28 is an N6-acetyllysine; alternate (Lys-28). Lys-28 carries the post-translational modification N6-methyllysine; alternate. Residue Lys-28 is modified to N6-lactoyllysine; alternate. Lys-28 is modified (N6-glutaryllysine; alternate). Ser-29 is subject to ADP-ribosylserine; alternate. Ser-29 carries the phosphoserine; alternate; by AURKB, AURKC and RPS6KA5 modification. Ser-32 carries the post-translational modification Phosphoserine. An N6-methyllysine modification is found at Lys-37. Tyr-41 is subject to Phosphotyrosine. Lys-56 bears the N6,N6,N6-trimethyllysine; alternate mark. Lys-56 is subject to N6-(2-hydroxyisobutyryl)lysine; alternate. Residue Lys-56 is modified to N6-(beta-hydroxybutyryl)lysine; alternate. The residue at position 56 (Lys-56) is an N6-acetyllysine; alternate. At Lys-56 the chain carries N6-lactoyllysine; alternate. Lys-56 bears the N6-glutaryllysine; alternate mark. The residue at position 56 (Lys-56) is an N6-succinyllysine; alternate. Lys-56 bears the N6-methyllysine; by EHMT2; alternate mark. At Ser-57 the chain carries Phosphoserine. Lys-64 is modified (N6-(2-hydroxyisobutyryl)lysine; alternate). Residue Lys-64 is modified to N6-methyllysine; alternate. Thr-80 carries the phosphothreonine modification. Position 86 is a phosphoserine (Ser-86). Thr-107 carries the phosphothreonine modification. N6-glutaryllysine; alternate is present on residues Lys-115 and Lys-122. Position 115 is an N6-acetyllysine (Lys-115). Position 122 is an N6-(2-hydroxyisobutyryl)lysine; alternate (Lys-122). Lys-122 bears the N6-acetyllysine; alternate mark. Lys-122 carries the post-translational modification N6-methyllysine; alternate. The residue at position 122 (Lys-122) is an N6-succinyllysine; alternate.

It belongs to the histone H3 family. In terms of assembly, the nucleosome is a histone octamer containing two molecules each of H2A, H2B, H3 and H4 assembled in one H3-H4 heterotetramer and two H2A-H2B heterodimers. The octamer wraps approximately 147 bp of DNA. Acetylation is generally linked to gene activation. Acetylation on Lys-10 (H3K9ac) impairs methylation at Arg-9 (H3R8me2s). Acetylation on Lys-19 (H3K18ac) and Lys-24 (H3K24ac) favors methylation at Arg-18 (H3R17me). Acetylation at Lys-122 (H3K122ac) by EP300/p300 plays a central role in chromatin structure: localizes at the surface of the histone octamer and stimulates transcription, possibly by promoting nucleosome instability. In terms of processing, citrullination at Arg-9 (H3R8ci) and/or Arg-18 (H3R17ci) by PADI4 impairs methylation and represses transcription. Post-translationally, asymmetric dimethylation at Arg-18 (H3R17me2a) by CARM1 is linked to gene activation. Symmetric dimethylation at Arg-9 (H3R8me2s) by PRMT5 is linked to gene repression. Asymmetric dimethylation at Arg-3 (H3R2me2a) by PRMT6 is linked to gene repression and is mutually exclusive with H3 Lys-5 methylation (H3K4me2 and H3K4me3). H3R2me2a is present at the 3' of genes regardless of their transcription state and is enriched on inactive promoters, while it is absent on active promoters. Methylation at Lys-5 (H3K4me) is linked to gene activation. Methylation at Lys-5 (H3K4me) facilitates subsequent acetylation of H3 and H4. Methylation at Lys-10 (H3K9me) and Lys-28 (H3K27me) are linked to gene repression. Methylation at Lys-10 (H3K9me) is a specific target for HP1 proteins (CBX1, CBX3 and CBX5) and prevents subsequent phosphorylation at Ser-11 (H3S10ph) and acetylation of H3 and H4. Methylation at Lys-5 (H3K4me) requires preliminary monoubiquitination of H2B at 'Lys-120'. Methylation at Lys-10 (H3K9me) and Lys-28 (H3K27me) are enriched in inactive X chromosome chromatin. Monomethylation at Lys-56 (H3K56me1) by EHMT2/G9A in G1 phase promotes interaction with PCNA and is required for DNA replication. In terms of processing, phosphorylated at Thr-4 (H3T3ph) by HASPIN during prophase and dephosphorylated during anaphase. Phosphorylation at Ser-11 (H3S10ph) by AURKB is crucial for chromosome condensation and cell-cycle progression during mitosis and meiosis. In addition phosphorylation at Ser-11 (H3S10ph) by RPS6KA4 and RPS6KA5 is important during interphase because it enables the transcription of genes following external stimulation, like mitogens, stress, growth factors or UV irradiation and result in the activation of genes, such as c-fos and c-jun. Phosphorylation at Ser-11 (H3S10ph), which is linked to gene activation, prevents methylation at Lys-10 (H3K9me) but facilitates acetylation of H3 and H4. Phosphorylation at Ser-11 (H3S10ph) by AURKB mediates the dissociation of HP1 proteins (CBX1, CBX3 and CBX5) from heterochromatin. Phosphorylation at Ser-11 (H3S10ph) is also an essential regulatory mechanism for neoplastic cell transformation. Phosphorylated at Ser-29 (H3S28ph) by MAP3K20 isoform 1, RPS6KA5 or AURKB during mitosis or upon ultraviolet B irradiation. Phosphorylation at Thr-7 (H3T6ph) by PRKCB is a specific tag for epigenetic transcriptional activation that prevents demethylation of Lys-5 (H3K4me) by LSD1/KDM1A. At centromeres, specifically phosphorylated at Thr-12 (H3T11ph) from prophase to early anaphase, by DAPK3 and PKN1. Phosphorylation at Thr-12 (H3T11ph) by PKN1 or isoform M2 of PKM (PKM2) is a specific tag for epigenetic transcriptional activation that promotes demethylation of Lys-10 (H3K9me) by KDM4C/JMJD2C. Phosphorylation at Tyr-41 (H3Y41ph) by JAK2 promotes exclusion of CBX5 (HP1 alpha) from chromatin. Post-translationally, lysine deamination at Lys-5 (H3K4all) to form allysine is mediated by LOXL2. Allysine formation by LOXL2 only takes place on H3K4me3 and results in gene repression. Butyrylation of histones marks active promoters and competes with histone acetylation. It is present during late spermatogenesis. In terms of processing, succinylated. Desuccinylation at Lys-122 (H3K122succ) by SIRT7 in response to DNA damage promotes chromatin condensation and double-strand breaks (DSBs) repair. Post-translationally, serine ADP-ribosylation constitutes the primary form of ADP-ribosylation of proteins in response to DNA damage. Serine ADP-ribosylation at Ser-11 (H3S10ADPr) is mutually exclusive with phosphorylation at Ser-11 (H3S10ph) and impairs acetylation at Lys-10 (H3K9ac). In terms of tissue distribution, specifically expressed in the seminiferous tubules of testis.

It is found in the nucleus. The protein resides in the chromosome. In terms of biological role, core component of nucleosome. Nucleosomes wrap and compact DNA into chromatin, limiting DNA accessibility to the cellular machineries which require DNA as a template. Histones thereby play a central role in transcription regulation, DNA repair, DNA replication and chromosomal stability. DNA accessibility is regulated via a complex set of post-translational modifications of histones, also called histone code, and nucleosome remodeling. Hominid-specific H3.5/H3F3C preferentially colocalizes with euchromatin, and it is associated with actively transcribed genes. The polypeptide is Histone H3.3C (Homo sapiens (Human)).